Consider the following 287-residue polypeptide: Glycine--tRNA ligase alpha subunit (287 aa).

The protein belongs to the class-II aminoacyl-tRNA synthetase family. In terms of assembly, tetramer of two alpha and two beta subunits.

It localises to the cytoplasm. It carries out the reaction tRNA(Gly) + glycine + ATP = glycyl-tRNA(Gly) + AMP + diphosphate. The chain is Glycine--tRNA ligase alpha subunit from Campylobacter jejuni (strain RM1221).